A 312-amino-acid polypeptide reads, in one-letter code: tRNA pseudouridine synthase B (312 aa).

The Nucleophile role is filled by Asp-46. Residues Tyr-74, Tyr-177, and Leu-198 each contribute to the substrate site.

Belongs to the pseudouridine synthase TruB family. Type 1 subfamily.

The enzyme catalyses uridine(55) in tRNA = pseudouridine(55) in tRNA. Functionally, responsible for synthesis of pseudouridine from uracil-55 in the psi GC loop of transfer RNAs. The protein is tRNA pseudouridine synthase B of Buchnera aphidicola subsp. Acyrthosiphon pisum (strain APS) (Acyrthosiphon pisum symbiotic bacterium).